The sequence spans 313 residues: Caffeic acid 3-O-methyltransferase (313 aa).

Ile112–Phe118 contacts substrate. Residues Ala144–Met162 are substrate binding. S-adenosyl-L-methionine-binding residues include Gly190, Asp213, Asp233, Met234, and Lys247. The Proton acceptor role is filled by His251.

Belongs to the class I-like SAM-binding methyltransferase superfamily. Cation-independent O-methyltransferase family. COMT subfamily. As to quaternary structure, homodimer.

It carries out the reaction (E)-caffeate + S-adenosyl-L-methionine = (E)-ferulate + S-adenosyl-L-homocysteine + H(+). It participates in aromatic compound metabolism; phenylpropanoid biosynthesis. In terms of biological role, catalyzes the conversion of caffeic acid to ferulic acid and of 5-hydroxyferulic acid to sinapic acid. The resulting products may subsequently be converted to the corresponding alcohols that are incorporated into lignins. In Eucalyptus globulus (Tasmanian blue gum), this protein is Caffeic acid 3-O-methyltransferase (COMT1).